We begin with the raw amino-acid sequence, 337 residues long: Calcium-binding protein 39-like (337 aa).

The protein belongs to the Mo25 family. In terms of assembly, component of a trimeric complex composed of STK11/LKB1, STRAD (STRADA or STRADB) and CAB39/MO25 (CAB39/MO25alpha or CAB39L/MO25beta): the complex tethers STK11/LKB1 in the cytoplasm and stimulates its catalytic activity.

In terms of biological role, component of a complex that binds and activates STK11/LKB1. In the complex, required to stabilize the interaction between CAB39/MO25 (CAB39/MO25alpha or CAB39L/MO25beta) and STK11/LKB1. This chain is Calcium-binding protein 39-like (Cab39l), found in Mus musculus (Mouse).